Reading from the N-terminus, the 199-residue chain is Pyridoxal 5'-phosphate synthase subunit PdxT (199 aa).

Residue 47–49 (GES) coordinates L-glutamine. Cysteine 79 (nucleophile) is an active-site residue. Residues arginine 106 and 133-134 (IR) each bind L-glutamine. Catalysis depends on charge relay system residues histidine 169 and glutamate 171.

It belongs to the glutaminase PdxT/SNO family. As to quaternary structure, in the presence of PdxS, forms a dodecamer of heterodimers. Only shows activity in the heterodimer.

It carries out the reaction aldehydo-D-ribose 5-phosphate + D-glyceraldehyde 3-phosphate + L-glutamine = pyridoxal 5'-phosphate + L-glutamate + phosphate + 3 H2O + H(+). The catalysed reaction is L-glutamine + H2O = L-glutamate + NH4(+). It participates in cofactor biosynthesis; pyridoxal 5'-phosphate biosynthesis. Functionally, catalyzes the hydrolysis of glutamine to glutamate and ammonia as part of the biosynthesis of pyridoxal 5'-phosphate. The resulting ammonia molecule is channeled to the active site of PdxS. The polypeptide is Pyridoxal 5'-phosphate synthase subunit PdxT (Desulfitobacterium hafniense (strain DSM 10664 / DCB-2)).